The sequence spans 42 residues: Photosystem II reaction center protein J (42 aa).

A helical transmembrane segment spans residues 10-30 (IPLWLVLTIIGLAAIALLALF).

Belongs to the PsbJ family. PSII is composed of 1 copy each of membrane proteins PsbA, PsbB, PsbC, PsbD, PsbE, PsbF, PsbH, PsbI, PsbJ, PsbK, PsbL, PsbM, PsbT, PsbY, PsbZ, Psb30/Ycf12, at least 3 peripheral proteins of the oxygen-evolving complex and a large number of cofactors. It forms dimeric complexes.

The protein localises to the plastid. Its subcellular location is the chloroplast thylakoid membrane. This protein is a component of the reaction center of photosystem II. Functionally, one of the components of the core complex of photosystem II (PSII). PSII is a light-driven water:plastoquinone oxidoreductase that uses light energy to abstract electrons from H(2)O, generating O(2) and a proton gradient subsequently used for ATP formation. It consists of a core antenna complex that captures photons, and an electron transfer chain that converts photonic excitation into a charge separation. The chain is Photosystem II reaction center protein J from Euglena gracilis.